A 540-amino-acid polypeptide reads, in one-letter code: Acetyl-coenzyme A carboxylase carboxyl transferase subunit beta, chloroplastic (540 aa).

The tract at residues 229–249 is disordered; the sequence is YSDNGSSSIRTRTSTSSGSSY. Residues 233–248 are compositionally biased toward low complexity; the sequence is GSSSIRTRTSTSSGSS. A CoA carboxyltransferase N-terminal domain is found at 267-538; sequence LWVQCENCYA…TFHPLKSNKV (272 aa). Residues Cys271, Cys274, Cys290, and Cys293 each coordinate Zn(2+). The C4-type zinc finger occupies 271 to 293; sequence CENCYALNYNKLFRSKMNVCEQC.

This sequence belongs to the AccD/PCCB family. Acetyl-CoA carboxylase is a heterohexamer composed of biotin carboxyl carrier protein, biotin carboxylase and 2 subunits each of ACCase subunit alpha and ACCase plastid-coded subunit beta (accD). It depends on Zn(2+) as a cofactor.

It localises to the plastid. The protein resides in the chloroplast stroma. It carries out the reaction N(6)-carboxybiotinyl-L-lysyl-[protein] + acetyl-CoA = N(6)-biotinyl-L-lysyl-[protein] + malonyl-CoA. It participates in lipid metabolism; malonyl-CoA biosynthesis; malonyl-CoA from acetyl-CoA: step 1/1. Functionally, component of the acetyl coenzyme A carboxylase (ACC) complex. Biotin carboxylase (BC) catalyzes the carboxylation of biotin on its carrier protein (BCCP) and then the CO(2) group is transferred by the transcarboxylase to acetyl-CoA to form malonyl-CoA. The polypeptide is Acetyl-coenzyme A carboxylase carboxyl transferase subunit beta, chloroplastic (Amborella trichopoda).